Consider the following 653-residue polypeptide: Dystrotelin (653 aa).

The ZZ-type zinc finger occupies 223–279 (THPVRCSVCRTFPIIGLRYHCLKCLDFDICELCFLSGLHKNSHEKSHTVMEECVQMS). Residues cysteine 228, cysteine 231, cysteine 243, cysteine 246, cysteine 252, cysteine 255, histidine 265, and histidine 269 each contribute to the Zn(2+) site. Residues 384 to 411 (RDSLNTLLRERRLLRKQLHRYKQKLQGT) are a coiled coil.

As to expression, strongly expressed in the nervous and muscular tissues.

Its subcellular location is the cell membrane. This chain is Dystrotelin (Dytn), found in Mus musculus (Mouse).